An 831-amino-acid chain; its full sequence is Sodium/hydrogen exchanger 3 (831 aa).

A signal peptide spans M1–G28. At I29–H48 the chain is on the extracellular side. The chain crosses the membrane as a helical span at residues V49–L71. Topologically, residues S72–V79 are cytoplasmic. The helical transmembrane segment at P80 to A99 threads the bilayer. The Extracellular segment spans residues D100–T108. Residues P109–Y126 traverse the membrane as a helical segment. Residues F127–P129 lie on the Cytoplasmic side of the membrane. The helical transmembrane segment at N130–S165 threads the bilayer. The a 1,2-diacyl-sn-glycero-3-phospho-(1D-myo-inositol) site is built by G135, G138, and T139. The Extracellular segment spans residues G166 to F178. A helical transmembrane segment spans residues L179–V200. The Cytoplasmic segment spans residues H201–V202. The helical transmembrane segment at N203–L234 threads the bilayer. Topologically, residues G235–G241 are extracellular. Residues V242–T276 form a helical membrane-spanning segment. Residues K277–H278 lie on the Cytoplasmic side of the membrane. The helical transmembrane segment at V279 to L301 threads the bilayer. Topologically, residues S302–L303 are extracellular. The chain crosses the membrane as a helical span at residues S304 to V320. The Cytoplasmic portion of the chain corresponds to K321–Q327. Residues S328–V356 form a helical membrane-spanning segment. The Extracellular segment spans residues D357–N364. A helical membrane pass occupies residues T365–Q386. The Cytoplasmic segment spans residues T387–E399. M395 contacts a 1,2-diacyl-sn-glycero-3-phospho-(1D-myo-inositol). The helical transmembrane segment at T400–L423 threads the bilayer. Residues D424 to E430 lie on the Extracellular side of the membrane. The helical transmembrane segment at K431–R464 threads the bilayer. Topologically, residues S465–M831 are cytoplasmic. Positions 494, 495, and 497 each coordinate a 1,2-diacyl-sn-glycero-3-phospho-(1D-myo-inositol). Phosphoserine is present on residues S552 and S560. An interaction with EZR region spans residues R573 to E587. Positions N588–A665 are interaction with NHERF4. The interaction with AHCYL1 stretch occupies residues V589–P693. Residues S590 and S605 each carry the phosphoserine modification. S661 is subject to Phosphoserine; by SGK1. 3 positions are modified to phosphoserine: S716, S807, and S810. The interval V808–M831 is disordered. The span at Q822–M831 shows a compositional bias: polar residues.

It belongs to the monovalent cation:p,roton antiporter 1 (CPA1) transporter (TC 2.A.36) family. Homodimer. Found in the forms of complex and dynamic macromolecular complexes. Binds NHERF1 and NHERF2. Interacts with NHERF4 and interactions decrease in response to elevated calcium ion levels. Interacts with PDZK1 (via C-terminal PDZ domain). Interacts with CHP1; this interaction increases trafficking and activity at the plasma membrane of SLC9A3. Interacts with CHP2 and SHANK2. Interacts with AHCYL1; the interaction is required for SLC9A3 activity. Interacts with EZR; interaction targets SLC9A3 to the apical membrane. Interacts with SNX27 (via PDZ domains); directs SLC9A3 membrane insertion from early endosomes to the plasma membrane. In terms of processing, phosphorylated by PRKACA at Ser-552 and Ser-605, which inhibits activity. Phosphorylation of Ser-605 is essential for cAMP-mediated inhibition of SLC9A3. Phosphorylation at Ser-661 by SGK1 is associated with increased abundance at the cell membrane. Phosphorylation at Ser-716 by CSNK2A1 regulates SLC9A3 activity through the formation of multiple signaling complexes. As to expression, most abundant in colon and small intestine, followed by kidney and stomach. In kidney, expressed in proximal tubules and outer medulla (at protein level).

Its subcellular location is the apical cell membrane. The protein resides in the cell membrane. It localises to the recycling endosome membrane. The protein localises to the early endosome membrane. The enzyme catalyses Na(+)(in) + H(+)(out) = Na(+)(out) + H(+)(in). Its activity is regulated as follows. Seems to switch between active and inactive modes in response to various stimuli. Activated directly or indirectly by membrane phosphatidylinositol (PIs). Regulated by a variety of auxiliary proteins, which facilitate the maturation, cell surface expression and function of the transporter. Inhibited specifically by the drug tenapanor. Functionally, plasma membrane Na(+)/H(+) antiporter. Exchanges intracellular H(+) ions for extracellular Na(+) in 1:1 stoichiometry, playing a key role in salt and fluid absorption and pH homeostasis. Major apical Na(+)/H(+) exchanger in kidney and intestine playing an important role in renal and intestine Na(+) absorption and blood pressure regulation. The chain is Sodium/hydrogen exchanger 3 (Slc9a3) from Rattus norvegicus (Rat).